The chain runs to 705 residues: Probable E3 ubiquitin-protein ligase MID2 (705 aa).

The segment at 30–80 (CPICLELFEDPLLLPCAHSLCFSCAHRILVSSCSSGESIEPITAFQCPTCR) adopts an RING-type zinc-finger fold. The segment at 137–184 (IACQFCEQDPPRDAVKTCITCEVSYCDRCLRATHPNKKPFTSHRLVEP) adopts a B box-type 1; degenerate zinc-finger fold. A B box-type 2 zinc finger spans residues 190–232 (LRGITCLDHENEKVNMYCVSDDQLICALCKLVGRHRDHQVASL). Zn(2+) is bound by residues cysteine 195, histidine 198, cysteine 218, and histidine 224. Positions 233–301 (NDRFEKLKQT…IIQQRKQMIA (69 aa)) form a coiled coil. The region spanning 340 to 399 (LKENDQARFLQSAKNIAERVAMATASSQVLIPDINFNDAFENFALDFSREKKLLEGLDYL) is the COS domain. Residues 404 to 504 (PPSIREELCT…EPTRLKTNSQ (101 aa)) form the Fibronectin type-III domain. Residues 486–679 (INQAGSRNSE…ILSGLPAPDF (194 aa)) form the B30.2/SPRY domain.

It belongs to the TRIM/RBCC family. Homodimer or heterodimer with MID1. Interacts with IGBP1. Phosphorylated on serine and threonine residues. In terms of tissue distribution, low abundance in brain and lung, with even lower levels in heart, liver, and kidney.

Its subcellular location is the cytoplasm. The protein resides in the cytoskeleton. It carries out the reaction S-ubiquitinyl-[E2 ubiquitin-conjugating enzyme]-L-cysteine + [acceptor protein]-L-lysine = [E2 ubiquitin-conjugating enzyme]-L-cysteine + N(6)-ubiquitinyl-[acceptor protein]-L-lysine.. It functions in the pathway protein modification; protein ubiquitination. Its function is as follows. E3 ubiquitin ligase that plays a role in microtubule stabilization. Mediates the 'Lys-48'-linked polyubiquitination of LRRK2 to drive its localization to microtubules and its proteasomal degradation in neurons. This ubiquitination inhibits LRRK2 kinase activation by RAB29. The chain is Probable E3 ubiquitin-protein ligase MID2 (Mid2) from Mus musculus (Mouse).